Here is a 159-residue protein sequence, read N- to C-terminus: Crossover junction endodeoxyribonuclease RuvC (159 aa).

Catalysis depends on residues aspartate 7, glutamate 66, and aspartate 139. Mg(2+) contacts are provided by aspartate 7, glutamate 66, and aspartate 139.

It belongs to the RuvC family. As to quaternary structure, homodimer which binds Holliday junction (HJ) DNA. The HJ becomes 2-fold symmetrical on binding to RuvC with unstacked arms; it has a different conformation from HJ DNA in complex with RuvA. In the full resolvosome a probable DNA-RuvA(4)-RuvB(12)-RuvC(2) complex forms which resolves the HJ. Mg(2+) serves as cofactor.

It localises to the cytoplasm. The enzyme catalyses Endonucleolytic cleavage at a junction such as a reciprocal single-stranded crossover between two homologous DNA duplexes (Holliday junction).. Functionally, the RuvA-RuvB-RuvC complex processes Holliday junction (HJ) DNA during genetic recombination and DNA repair. Endonuclease that resolves HJ intermediates. Cleaves cruciform DNA by making single-stranded nicks across the HJ at symmetrical positions within the homologous arms, yielding a 5'-phosphate and a 3'-hydroxyl group; requires a central core of homology in the junction. The consensus cleavage sequence is 5'-(A/T)TT(C/G)-3'. Cleavage occurs on the 3'-side of the TT dinucleotide at the point of strand exchange. HJ branch migration catalyzed by RuvA-RuvB allows RuvC to scan DNA until it finds its consensus sequence, where it cleaves and resolves the cruciform DNA. The sequence is that of Crossover junction endodeoxyribonuclease RuvC from Sulfurovum sp. (strain NBC37-1).